The chain runs to 177 residues: Cell division protein ZapC (177 aa).

This sequence belongs to the ZapC family. As to quaternary structure, interacts directly with FtsZ.

It localises to the cytoplasm. In terms of biological role, contributes to the efficiency of the cell division process by stabilizing the polymeric form of the cell division protein FtsZ. Acts by promoting interactions between FtsZ protofilaments and suppressing the GTPase activity of FtsZ. The protein is Cell division protein ZapC of Shewanella frigidimarina (strain NCIMB 400).